The following is a 235-amino-acid chain: Pro-opiomelanocortin (235 aa).

The first 26 residues, 1–26 (MPRFCNSRSGALLLALLLQTSIDVWS), serve as a signal peptide directing secretion. Phenylalanine amide is present on Phe-87. Residues 88–128 (GPRNSSSAGGSAQRRAEEETAGGDGRPEPSPREGKRSYSME) form a disordered region. The span at 112 to 128 (GRPEPSPREGKRSYSME) shows a compositional bias: basic and acidic residues. The residue at position 124 (Ser-124) is an N-acetylserine; in Corticotropin. Residue Val-136 is modified to Valine amide. N-linked (GlcNAc...) asparagine glycosylation occurs at Asn-152. The residue at position 154 (Ser-154) is a Phosphoserine. Residues 169-209 (EQPDGLEQVLEPDTEKADGPYRVEHFRWGNPPKDKRYGGFM) are disordered. The span at 181–205 (DTEKADGPYRVEHFRWGNPPKDKRY) shows a compositional bias: basic and acidic residues.

The protein belongs to the POMC family. Post-translationally, specific enzymatic cleavages at paired basic residues yield the different active peptides. In terms of tissue distribution, ACTH and MSH are produced by the pituitary gland.

It localises to the secreted. Functionally, stimulates the adrenal glands to release cortisol. In terms of biological role, anorexigenic peptide. Increases the pigmentation of skin by increasing melanin production in melanocytes. Its function is as follows. Increases the pigmentation of skin by increasing melanin production in melanocytes. Endogenous orexigenic opiate. Functionally, endogenous opiate. The polypeptide is Pro-opiomelanocortin (Pomc) (Rattus norvegicus (Rat)).